The sequence spans 442 residues: Probable diguanylate cyclase DgcI (442 aa).

Positions 1–23 are cleaved as a signal peptide; the sequence is MSRINKFVLTVSLLIFIMISAVA. The N-palmitoyl cysteine moiety is linked to residue Cys-24. Residue Cys-24 is the site of S-diacylglycerol cysteine attachment. Residues 231–251 form a helical membrane-spanning segment; it reads LIIFFAALVAVISGASCLYLV. A GGDEF domain is found at 319 to 442; that stretch reads KGGYLCLFDV…KNGRAQISWQ (124 aa). Asp-327 contacts Mg(2+). 3 residues coordinate substrate: Asn-335, His-340, and Asp-344. Asp-371 contacts Mg(2+).

Homodimer. Mg(2+) is required as a cofactor.

It localises to the cell membrane. The catalysed reaction is 2 GTP = 3',3'-c-di-GMP + 2 diphosphate. The protein operates within purine metabolism; 3',5'-cyclic di-GMP biosynthesis. Functionally, catalyzes the synthesis of cyclic-di-GMP (c-di-GMP) via the condensation of 2 GTP molecules. The chain is Probable diguanylate cyclase DgcI from Escherichia coli (strain K12).